The primary structure comprises 275 residues: Bifunctional protein FolD (275 aa).

Residues 161–163, Ser-186, and Thr-227 contribute to the NADP(+) site; that span reads GRS.

Belongs to the tetrahydrofolate dehydrogenase/cyclohydrolase family. Homodimer.

It catalyses the reaction (6R)-5,10-methylene-5,6,7,8-tetrahydrofolate + NADP(+) = (6R)-5,10-methenyltetrahydrofolate + NADPH. The enzyme catalyses (6R)-5,10-methenyltetrahydrofolate + H2O = (6R)-10-formyltetrahydrofolate + H(+). It functions in the pathway one-carbon metabolism; tetrahydrofolate interconversion. Its function is as follows. Catalyzes the oxidation of 5,10-methylenetetrahydrofolate to 5,10-methenyltetrahydrofolate and then the hydrolysis of 5,10-methenyltetrahydrofolate to 10-formyltetrahydrofolate. In Parafrankia sp. (strain EAN1pec), this protein is Bifunctional protein FolD.